The sequence spans 376 residues: Succinyl-diaminopimelate desuccinylase (376 aa).

His67 contacts Zn(2+). Residue Asp69 is part of the active site. Asp100 is a Zn(2+) binding site. Catalysis depends on Glu134, which acts as the Proton acceptor. The Zn(2+) site is built by Glu135, Glu163, and His349.

Belongs to the peptidase M20A family. DapE subfamily. In terms of assembly, homodimer. Requires Zn(2+) as cofactor. It depends on Co(2+) as a cofactor.

The enzyme catalyses N-succinyl-(2S,6S)-2,6-diaminopimelate + H2O = (2S,6S)-2,6-diaminopimelate + succinate. Its pathway is amino-acid biosynthesis; L-lysine biosynthesis via DAP pathway; LL-2,6-diaminopimelate from (S)-tetrahydrodipicolinate (succinylase route): step 3/3. Catalyzes the hydrolysis of N-succinyl-L,L-diaminopimelic acid (SDAP), forming succinate and LL-2,6-diaminopimelate (DAP), an intermediate involved in the bacterial biosynthesis of lysine and meso-diaminopimelic acid, an essential component of bacterial cell walls. The sequence is that of Succinyl-diaminopimelate desuccinylase from Nitrosomonas europaea (strain ATCC 19718 / CIP 103999 / KCTC 2705 / NBRC 14298).